Here is a 562-residue protein sequence, read N- to C-terminus: Teichoic acid ribitol-phosphate polymerase TarL (562 aa).

Belongs to the CDP-glycerol glycerophosphotransferase family.

It localises to the cell membrane. It catalyses the reaction 4-O-[di(2R)-glycerylphospho]-N-acetyl-beta-D-mannosaminyl-(1-&gt;4)-N-acetyl-alpha-D-glucosaminyl di-trans,octa-cis-undecaprenyl diphosphate + n CDP-L-ribitol = 4-O-[(D-ribitylphospho)(n)-di{(2R)-glycerylphospho}]-N-acetyl-beta-D-mannosaminyl-(1-&gt;4)-N-acetyl-alpha-D-glucosaminyl di-trans,octa-cis-undecaprenyl diphosphate + n CMP + n H(+). The protein operates within cell wall biogenesis; poly(ribitol phosphate) teichoic acid biosynthesis. Its function is as follows. Responsible for the polymerization of the main chain of the major teichoic acid by sequential transfer of ribitol phosphate units from CDP-ribitol to the second glycerol phosphate attached to the disaccharide linkage unit. Synthesizes polymers of more than 40 ribitol phosphate units in length. The polypeptide is Teichoic acid ribitol-phosphate polymerase TarL (tarL) (Staphylococcus aureus (strain NCTC 8325 / PS 47)).